Reading from the N-terminus, the 366-residue chain is 3-dehydroquinate synthase (366 aa).

Residues 73–78 (DGERAK), 107–111 (GVVGD), 131–132 (TT), Lys-144, and Lys-153 each bind NAD(+). Zn(2+) contacts are provided by Glu-186, His-249, and His-266.

Belongs to the sugar phosphate cyclases superfamily. Dehydroquinate synthase family. Co(2+) serves as cofactor. The cofactor is Zn(2+). It depends on NAD(+) as a cofactor.

It is found in the cytoplasm. It catalyses the reaction 7-phospho-2-dehydro-3-deoxy-D-arabino-heptonate = 3-dehydroquinate + phosphate. It participates in metabolic intermediate biosynthesis; chorismate biosynthesis; chorismate from D-erythrose 4-phosphate and phosphoenolpyruvate: step 2/7. Catalyzes the conversion of 3-deoxy-D-arabino-heptulosonate 7-phosphate (DAHP) to dehydroquinate (DHQ). This is 3-dehydroquinate synthase from Koribacter versatilis (strain Ellin345).